An 869-amino-acid chain; its full sequence is Protein translocase subunit SecA (869 aa).

ATP contacts are provided by residues glutamine 85, 103-107 (GEGKT), and aspartate 508.

The protein belongs to the SecA family. Monomer and homodimer. Part of the essential Sec protein translocation apparatus which comprises SecA, SecYEG and auxiliary proteins SecDF. Other proteins may also be involved.

It localises to the cell membrane. The protein localises to the cytoplasm. The catalysed reaction is ATP + H2O + cellular proteinSide 1 = ADP + phosphate + cellular proteinSide 2.. In terms of biological role, part of the Sec protein translocase complex. Interacts with the SecYEG preprotein conducting channel. Has a central role in coupling the hydrolysis of ATP to the transfer of proteins into and across the cell membrane, serving as an ATP-driven molecular motor driving the stepwise translocation of polypeptide chains across the membrane. In Deinococcus geothermalis (strain DSM 11300 / CIP 105573 / AG-3a), this protein is Protein translocase subunit SecA.